The chain runs to 113 residues: Propane 2-monooxygenase, effector component (113 aa).

It belongs to the TmoD/XamoD family. In terms of assembly, the propane 2-monooxygenase multicomponent enzyme system is composed of an electron transfer component and a monooxygenase component interacting with the effector protein PrmD. The electron transfer component is composed of a reductase (PrmB), and the monooxygenase component is formed by a large subunit (PrmA) and a small subunit (PrmC).

Its function is as follows. Effector component of the propane 2-monooxygenase multicomponent enzyme system which is involved in the degradation of propane via the O2-dependent hydroxylation of propane. The chain is Propane 2-monooxygenase, effector component from Rhodococcus jostii (strain RHA1).